A 53-amino-acid chain; its full sequence is Cytochrome c oxidase subunit 7e (53 aa).

Slime mold cytochrome c oxidase consists of at least seven different polypeptides species, subunits I, II, III, IV, V, VI, and VIIe/s in order of MW.

The protein localises to the mitochondrion inner membrane. The catalysed reaction is 4 Fe(II)-[cytochrome c] + O2 + 8 H(+)(in) = 4 Fe(III)-[cytochrome c] + 2 H2O + 4 H(+)(out). Functionally, this protein is one of the nuclear-coded polypeptide chains of cytochrome c oxidase, the terminal oxidase in mitochondrial electron transport. In Dictyostelium discoideum (Social amoeba), this protein is Cytochrome c oxidase subunit 7e (cxgE).